The chain runs to 134 residues: MSWQTYVDDHLMCDIEGHEGHRLTAAAIVGHDGSVWAQSATFPQFKPEEMNGIMTDFNEPGHLAPTGLHLGGTKYMVIQGEAGAVIRGKKGSGGITIKKTGQALVFGIYEEPVTPGQCNMVVERLGDYLLEQGM.

Cysteine 13 and cysteine 118 are oxidised to a cystine. The Involved in PIP2 interaction signature appears at 84–100 (AVIRGKKGSGGITIKKT). Position 114 is a phosphothreonine (threonine 114).

It belongs to the profilin family. In terms of assembly, occurs in many kinds of cells as a complex with monomeric actin in a 1:1 ratio. In terms of processing, phosphorylated by MAP kinases.

It localises to the cytoplasm. Its subcellular location is the cytoskeleton. Binds to actin and affects the structure of the cytoskeleton. At high concentrations, profilin prevents the polymerization of actin, whereas it enhances it at low concentrations. This chain is Profilin-3, found in Olea europaea (Common olive).